We begin with the raw amino-acid sequence, 360 residues long: MSLIRLNIDSFRNIQLAQLSPSEGINLIYGQNGSGKTSILEAIYFLGMGRSFRSHLSQRVINNDQDKLTLFATLNLPRGDSKIGLRRFRSGETEVKIDGEKVKRLSTLAETLPIQVITPESFSLLFEGPKSRRQFIDWGAFHTDPQFYAAWMNVRRVLKQRNQMLRNGSPYDQIQYWDREFIRYTEQVTEIRNRYVDSLNELLKGIIGEFLPQVDVKVSFTRGWDSKTDFAQLLESQYPRDLATGHTVSGPHKADLRLRVGTLPAQDALSRGQLKLLVCALRIAQGKLLKQQIDKHSIYLVDDLPSELDAQHRQLLLKQLVDTGAQVFVTAIEPAAIVDSLHTPPSRMFHVEHGRVTVIE.

30-37 (GQNGSGKT) lines the ATP pocket.

Belongs to the RecF family.

It localises to the cytoplasm. In terms of biological role, the RecF protein is involved in DNA metabolism; it is required for DNA replication and normal SOS inducibility. RecF binds preferentially to single-stranded, linear DNA. It also seems to bind ATP. The protein is DNA replication and repair protein RecF of Shewanella oneidensis (strain ATCC 700550 / JCM 31522 / CIP 106686 / LMG 19005 / NCIMB 14063 / MR-1).